The primary structure comprises 178 residues: Fatty-acid and retinol-binding protein 1 (178 aa).

Residues 1-16 (MYHQLILMALIGVIMA) form the signal peptide. Residues asparagine 44 and asparagine 75 are each glycosylated (N-linked (GlcNAc...) asparagine). Coiled coils occupy residues 67-89 (DAAL…ELRN) and 122-154 (QKLD…LKAT). Residue asparagine 157 is glycosylated (N-linked (GlcNAc...) asparagine).

It belongs to the fatty-acid and retinol-binding protein (FARBP) family. N-glycosylated.

The protein localises to the secreted. Functionally, binds retinol and different fatty acids. In Onchocerca ochengi (Filarial nematode worm), this protein is Fatty-acid and retinol-binding protein 1.